Consider the following 149-residue polypeptide: Ribonuclease pancreatic (149 aa).

Positions 1–25 are cleaved as a signal peptide; that stretch reads MGLEKSFILFSLLVLVLGWVQPSLG. Substrate-binding residues include Lys32 and Arg35. The active-site Proton acceptor is His37. Disulfide bonds link Cys51–Cys109, Cys65–Cys120, Cys83–Cys135, and Cys90–Cys97. Substrate is bound by residues 66–70, Lys91, and Arg110; that span reads KPVNT. The Proton donor role is filled by His144.

The protein belongs to the pancreatic ribonuclease family. In terms of assembly, monomer. Interacts with and forms tight 1:1 complexes with RNH1. Dimerization of two such complexes may occur. Interaction with RNH1 inhibits this protein. In terms of tissue distribution, pancreas.

The protein localises to the secreted. The enzyme catalyses an [RNA] containing cytidine + H2O = an [RNA]-3'-cytidine-3'-phosphate + a 5'-hydroxy-ribonucleotide-3'-[RNA].. It carries out the reaction an [RNA] containing uridine + H2O = an [RNA]-3'-uridine-3'-phosphate + a 5'-hydroxy-ribonucleotide-3'-[RNA].. In terms of biological role, endonuclease that catalyzes the cleavage of RNA on the 3' side of pyrimidine nucleotides. Acts on single-stranded and double-stranded RNA. This chain is Ribonuclease pancreatic (RNASE1), found in Leopoldamys edwardsi (Edwards's long-tailed giant rat).